The following is a 68-amino-acid chain: Large ribosomal subunit protein uL30 (68 aa).

This sequence belongs to the universal ribosomal protein uL30 family. As to quaternary structure, part of the 50S ribosomal subunit.

The sequence is that of Large ribosomal subunit protein uL30 from Paenarthrobacter aurescens (strain TC1).